A 231-amino-acid chain; its full sequence is Ion-translocating oxidoreductase complex subunit E (231 aa).

6 helical membrane passes run 18-38 (ALVQLLGLCPLLAVTSTATNA), 39-59 (LGLGLATTLVLTLTNLTISTL), 63-83 (TPAEIRIPIYVMIIASVVSAV), 86-106 (LINAYAFGLYQSLGIFIPLIV), 125-145 (ALSALDGFSIGMGATCAMFVL), and 182-202 (PFLLAMLPPGAFIGLGLMLAG).

Belongs to the NqrDE/RnfAE family. As to quaternary structure, the complex is composed of six subunits: RsxA, RsxB, RsxC, RsxD, RsxE and RsxG.

The protein localises to the cell inner membrane. In terms of biological role, part of a membrane-bound complex that couples electron transfer with translocation of ions across the membrane. Required to maintain the reduced state of SoxR. The sequence is that of Ion-translocating oxidoreductase complex subunit E from Shigella boydii serotype 18 (strain CDC 3083-94 / BS512).